The following is a 226-amino-acid chain: UPF0758 protein M6_Spy0838 (226 aa).

Residues 103 to 225 (SVLTSVQVAE…YYSFREKSTL (123 aa)) enclose the MPN domain. Zn(2+) is bound by residues H174, H176, and D187. Residues 174–187 (HNHPSGNIEPSSND) carry the JAMM motif motif.

This sequence belongs to the UPF0758 family.

This is UPF0758 protein M6_Spy0838 from Streptococcus pyogenes serotype M6 (strain ATCC BAA-946 / MGAS10394).